Here is a 1015-residue protein sequence, read N- to C-terminus: DNA polymerase catalytic subunit (1015 aa).

The protein belongs to the DNA polymerase type-B family. Forms a complex with the major DNA-binding protein BALF2, the DNA polymerase processivity factor BMRF1, and the alkaline exonuclease BGLF5. Interacts with the putative helicase-primase complex composed of BBLF4, BSLF1 and BBLF2/3 proteins; these interactions may coordinate leading and lagging strand DNA synthesis at the replication fork.

Its subcellular location is the host nucleus. It catalyses the reaction DNA(n) + a 2'-deoxyribonucleoside 5'-triphosphate = DNA(n+1) + diphosphate. Functionally, replicates viral genomic DNA in the late phase of lytic infection, producing long concatemeric DNA. The replication complex is composed of six viral proteins: the DNA polymerase, processivity factor, primase, primase-associated factor, helicase, and ssDNA-binding protein. This Homo sapiens (Human) protein is DNA polymerase catalytic subunit.